Consider the following 562-residue polypeptide: Tissue-type plasminogen activator (562 aa).

The N-terminal stretch at 1–20 is a signal peptide; the sequence is MNAMKRGLCCVLLLCGAVFA. A propeptide spanning residues 21-32 is cleaved from the precursor; it reads LPSQEIHARVRR. The propeptide at 33–35 is removed by plasmin; that stretch reads GAR. Residues 39-81 form the Fibronectin type-I domain; the sequence is VICRDEKTQMIYQQHQSWLRPVLRSNRVEYCWCNSGRAQCHSV. Cystine bridges form between Cys-41-Cys-71, Cys-69-Cys-78, Cys-86-Cys-97, Cys-91-Cys-108, Cys-110-Cys-119, Cys-127-Cys-208, Cys-148-Cys-190, Cys-179-Cys-203, Cys-215-Cys-296, Cys-236-Cys-278, Cys-267-Cys-291, Cys-299-Cys-430, Cys-342-Cys-358, Cys-350-Cys-419, Cys-444-Cys-519, Cys-476-Cys-492, and Cys-509-Cys-537. An important for binding to annexin A2 region spans residues 42–52; the sequence is RDEKTQMIYQQ. One can recognise an EGF-like domain in the interval 82 to 120; that stretch reads PVRSCSEPRCFNGGTCQQALYFSDFVCQCPEGFAGKCCE. Thr-96 carries O-linked (Fuc) threonine glycosylation. 2 Kringle domains span residues 126–208 and 214–296; these read TCYE…TPAC and DCYF…VPSC. A glycan (N-linked (GlcNAc...) asparagine) is linked at Asn-152. In terms of domain architecture, Peptidase S1 spans 311 to 561; that stretch reads IKGGLFADIA…YLDWIHDNMR (251 aa). Active-site charge relay system residues include His-357 and Asp-406. The N-linked (GlcNAc...) asparagine glycan is linked to Asn-483. Ser-513 functions as the Charge relay system in the catalytic mechanism.

It belongs to the peptidase S1 family. In terms of assembly, heterodimer of chain A and chain B held by a disulfide bond. Binds to fibrin with high affinity. This interaction leads to an increase in the catalytic efficiency of the enzyme due to an increase in affinity for plasminogen. Similarly, binding to heparin increases the activation of plasminogen. Binds to annexin A2, cytokeratin-8, fibronectin and laminin. Binds to mannose receptor and the low-density lipoprotein receptor-related protein (LRP1); these proteins are involved in TPA clearance. Binds LRP1B; binding is followed by internalization and degradation. Forms heterodimer with SERPINA5. Interacts with SERPINE1. In complex with SERPINE1, interacts with SORL1. Post-translationally, the single chain, almost fully active enzyme, can be further processed into a two-chain fully active form by a cleavage after Arg-310 catalyzed by plasmin, tissue kallikrein or factor Xa.

The protein resides in the secreted. The protein localises to the extracellular space. It catalyses the reaction Specific cleavage of Arg-|-Val bond in plasminogen to form plasmin.. Inhibited by SERPINA5. Inhibited by SERPINE1. In terms of biological role, converts the abundant, but inactive, zymogen plasminogen to plasmin by hydrolyzing a single Arg-Val bond in plasminogen. By controlling plasmin-mediated proteolysis, it plays an important role in tissue remodeling and degradation, in cell migration and many other physiopathological events. During oocyte activation, plays a role in cortical granule reaction in the zona reaction, which contributes to the block to polyspermy. The chain is Tissue-type plasminogen activator (PLAT) from Pongo abelii (Sumatran orangutan).